The chain runs to 2103 residues: uncharacterized protein (2103 aa).

Positions 1–12 (MSVPGTPGAMEP) are enriched in low complexity. A disordered region spans residues 1–61 (MSVPGTPGAM…DADDQEEEME (61 aa)). Residues 51–61 (EDADDQEEEME) show a composition bias toward acidic residues. One can recognise a Bromo domain in the interval 77–196 (YELQQGYRIL…MMLEQKLALL (120 aa)). Disordered regions lie at residues 730–750 (AKHKKHKSGKKSVSKKAITKK), 853–881 (NRELWTTDEGEGDLGKDSPKGEISKSIDS), 933–956 (QSKQTDYVDDSTKELSPRKKAKLS), 1224–1244 (SASPTISSTGQPLSSTTTLNG), and 1770–1817 (GATR…STSP). Positions 865–877 (DLGKDSPKGEISK) are enriched in basic and acidic residues. Residues 1224–1234 (SASPTISSTGQ) are compositionally biased toward polar residues. The segment covering 1235-1244 (PLSSTTTLNG) has biased composition (low complexity). Over residues 1773-1794 (RSVSISKRQSRTSLQFHSPGIS) the composition is skewed to polar residues. Residues 1795–1808 (TTVPTNVNTNKPQT) are compositionally biased toward low complexity.

The protein resides in the nucleus. This is an uncharacterized protein from Homo sapiens (Human).